A 133-amino-acid chain; its full sequence is Large ribosomal subunit protein uL22 (133 aa).

This sequence belongs to the universal ribosomal protein uL22 family. In terms of assembly, part of the 50S ribosomal subunit.

In terms of biological role, this protein binds specifically to 23S rRNA; its binding is stimulated by other ribosomal proteins, e.g. L4, L17, and L20. It is important during the early stages of 50S assembly. It makes multiple contacts with different domains of the 23S rRNA in the assembled 50S subunit and ribosome. Functionally, the globular domain of the protein is located near the polypeptide exit tunnel on the outside of the subunit, while an extended beta-hairpin is found that lines the wall of the exit tunnel in the center of the 70S ribosome. This is Large ribosomal subunit protein uL22 from Granulibacter bethesdensis (strain ATCC BAA-1260 / CGDNIH1).